The chain runs to 168 residues: Gamma-glutamylaminecyclotransferase (168 aa).

The segment at 1-20 (MPGPECKWSTTETGAPCGTD) is disordered. 32–35 (YGTL) contacts substrate. Residue E107 is the Proton acceptor of the active site.

Belongs to the gamma-glutamylcyclotransferase family. As to quaternary structure, monomer.

It carries out the reaction epsilon-(gamma-L-glutamyl)-L-lysine = 5-oxo-L-proline + L-lysine. Contributes to degradation of proteins cross-linked by transglutaminases by degrading the cross-link between a lysine and a glutamic acid residue. Catalyzes the formation of 5-oxo-L-proline from L-gamma-glutamyl-L-epsilon-lysine. Inactive with L-gamma-glutamyl-alpha-amino acid substrates such as L-gamma-glutamyl-L-alpha-cysteine and L-gamma-glutamyl-L-alpha-alanine. The chain is Gamma-glutamylaminecyclotransferase (GGACT) from Bos taurus (Bovine).